The primary structure comprises 801 residues: MNQPTSRSGLTTFTVIIIGLLALFLLIGGIWLATLGGSIYYIIAGVLLLIVAWQLYKRASTALWFYAALMLGTIIWSVWEVGTDFWALAPRLDILGILGLWLLVPAVTRGINNLGSSKVALSSTLAIAIVLMVYSIFNDPQEINGEIKTPQPETAQAVPGVAESDWPAYGRTQAGVRYSPLKQINDQNVKDLKVAWTLRTGDLKTDNDSGETTNQVTPIKIGNNMFICTAHQQLIAIDPATGKEKWRFDPKLKTDKSFQHLTCRGVMYYDANNTTEFATSLQSKKSSSTQCPRKVFVPVNDGRLVAVNADTGKACTDFGQNGQVNLQEFMPYAYPGGYNPTSPGIVTGSTVVIAGSVTDNYSNKEPSGVIRGYDVNTGKLLWVFDTGAADPNAMPGEGTTFVHNSPNAWAPLAYDAKLDIVYVPTGVGTPDIWGGDRTELKERYANSMLAINASTGKLVWNFQTTHHDLWDMDVPSQPSLADIKNKAGQTVPAIYVLTKTGNAFVLDRRNGQPIVPVTEKPVPQTVKRGPQTKGEFYSKTQPFSDLNLAPQDKLTDKDMWGATMLDQLMCRVSFKRLNYDGIYTPPSENGTLVFPGNLGVFEWGGMSVNPDRQVAVMNPIGLPFVSRLIPADPNRAQTAKGAGTEQGVQPMYGVPYGVEISAFLSPLGLPCKQPAWGYVAGVDLKTHEVVWKKRIGTIRDSLPNLFQLPAVKIGVPGLGGSISTAGNVMFVGATQDNYLRAFNVTNGKKLWEARLPAGGQATPMTYEINGKQYVVIMAGGHGSFGTKMGDYLVAYALPDNK.

An N-terminal signal peptide occupies residues 1–33 (MNQPTSRSGLTTFTVIIIGLLALFLLIGGIWLA). Transmembrane regions (helical) follow at residues 39–55 (IYYI…AWQL), 59–79 (ASTA…WSVW), 94–108 (ILGI…PAVT), and 119–138 (VALS…SIFN). The active-site Proton acceptor is Asp-471.

Belongs to the bacterial PQQ dehydrogenase family. In terms of assembly, monomer. The cofactor is pyrroloquinoline quinone.

Its subcellular location is the cell inner membrane. It catalyses the reaction D-glucose + A = D-glucono-1,5-lactone + AH2. Its function is as follows. Catalyzes an exceptionally high rate of oxidation of a wide range of aldose sugars, including D-glucose, galactose, arabinose and xylose, and also the disaccharides lactose, cellobiose and maltose. This Acinetobacter calcoaceticus protein is Quinoprotein glucose dehydrogenase A (gdhA).